The primary structure comprises 82 residues: ATP synthase subunit c (82 aa).

2 helical membrane-spanning segments follow: residues 7-27 (LVAL…CIGI) and 53-73 (FLLA…AMLF).

This sequence belongs to the ATPase C chain family. F-type ATPases have 2 components, F(1) - the catalytic core - and F(0) - the membrane proton channel. F(1) has five subunits: alpha(3), beta(3), gamma(1), delta(1), epsilon(1). F(0) has three main subunits: a(1), b(2) and c(10-14). The alpha and beta chains form an alternating ring which encloses part of the gamma chain. F(1) is attached to F(0) by a central stalk formed by the gamma and epsilon chains, while a peripheral stalk is formed by the delta and b chains.

The protein resides in the cell inner membrane. F(1)F(0) ATP synthase produces ATP from ADP in the presence of a proton or sodium gradient. F-type ATPases consist of two structural domains, F(1) containing the extramembraneous catalytic core and F(0) containing the membrane proton channel, linked together by a central stalk and a peripheral stalk. During catalysis, ATP synthesis in the catalytic domain of F(1) is coupled via a rotary mechanism of the central stalk subunits to proton translocation. Functionally, key component of the F(0) channel; it plays a direct role in translocation across the membrane. A homomeric c-ring of between 10-14 subunits forms the central stalk rotor element with the F(1) delta and epsilon subunits. The chain is ATP synthase subunit c from Leptothrix cholodnii (strain ATCC 51168 / LMG 8142 / SP-6) (Leptothrix discophora (strain SP-6)).